The following is a 645-amino-acid chain: 1,4-alpha-glucan branching enzyme GlgB (645 aa).

The active-site Nucleophile is the Asp309. Glu352 functions as the Proton donor in the catalytic mechanism. A disordered region spans residues 619-645 (VKTRKGSKKQDGSKTKVRSNVTSRGKR). A compositionally biased stretch (polar residues) spans 636-645 (RSNVTSRGKR).

Belongs to the glycosyl hydrolase 13 family. GlgB subfamily. Monomer.

The catalysed reaction is Transfers a segment of a (1-&gt;4)-alpha-D-glucan chain to a primary hydroxy group in a similar glucan chain.. Its pathway is glycan biosynthesis; glycogen biosynthesis. Functionally, catalyzes the formation of the alpha-1,6-glucosidic linkages in glycogen by scission of a 1,4-alpha-linked oligosaccharide from growing alpha-1,4-glucan chains and the subsequent attachment of the oligosaccharide to the alpha-1,6 position. The polypeptide is 1,4-alpha-glucan branching enzyme GlgB (Bacillus cereus (strain 03BB102)).